A 348-amino-acid chain; its full sequence is Ferrochelatase (348 aa).

Residues His218 and Glu299 each coordinate Fe cation.

It belongs to the ferrochelatase family.

It is found in the cytoplasm. The catalysed reaction is heme b + 2 H(+) = protoporphyrin IX + Fe(2+). It participates in porphyrin-containing compound metabolism; protoheme biosynthesis; protoheme from protoporphyrin-IX: step 1/1. In terms of biological role, catalyzes the ferrous insertion into protoporphyrin IX. This Methylocella silvestris (strain DSM 15510 / CIP 108128 / LMG 27833 / NCIMB 13906 / BL2) protein is Ferrochelatase.